Here is a 503-residue protein sequence, read N- to C-terminus: Nuclear respiratory factor 1 (503 aa).

The tract at residues 1-78 (MEEHGVTQTE…AHLAAAGPVG (78 aa)) is dimerization. Positions 36 to 57 (SMLSADEDSPSSPEDTSYDDSD) are disordered. 5 positions are modified to phosphoserine; by CK2: S39, S44, S46, S47, and S52. A Nuclear localization signal motif is present at residues 88–116 (GKKRKRPHVFESNPSIRKRQQTRLLRKLR). The DNA-binding element occupies 109–305 (TRLLRKLRAT…SIAHLVPSQT (197 aa)). K139 is covalently cross-linked (Glycyl lysine isopeptide (Lys-Gly) (interchain with G-Cter in SUMO2)). Residues 301–476 (VPSQTVVQTF…AQGNGPVQVA (176 aa)) are required for transcriptional activation.

Belongs to the NRF1/Ewg family. In terms of assembly, homodimer. Binds DNA as a dimer. Interacts with PPRC1. Phosphorylation enhances DNA binding. As to expression, widely expressed in embryonic, fetal, and adult tissues.

It localises to the nucleus. Its function is as follows. Transcription factor that activates the expression of the EIF2S1 (EIF2-alpha) gene. Links the transcriptional modulation of key metabolic genes to cellular growth and development. Implicated in the control of nuclear genes required for respiration, heme biosynthesis, and mitochondrial DNA transcription and replication. In Mus musculus (Mouse), this protein is Nuclear respiratory factor 1 (Nrf1).